The following is a 119-amino-acid chain: Iron-sulfur cluster insertion protein ErpA (119 aa).

Cys47, Cys111, and Cys113 together coordinate iron-sulfur cluster.

The protein belongs to the HesB/IscA family. As to quaternary structure, homodimer. Iron-sulfur cluster is required as a cofactor.

Required for insertion of 4Fe-4S clusters for at least IspG. The protein is Iron-sulfur cluster insertion protein ErpA of Alcanivorax borkumensis (strain ATCC 700651 / DSM 11573 / NCIMB 13689 / SK2).